The primary structure comprises 169 residues: Peptide deformylase (169 aa).

Fe cation is bound by residues Cys91 and His133. Glu134 is a catalytic residue. Residue His137 coordinates Fe cation.

It belongs to the polypeptide deformylase family. Fe(2+) serves as cofactor.

It carries out the reaction N-terminal N-formyl-L-methionyl-[peptide] + H2O = N-terminal L-methionyl-[peptide] + formate. Its function is as follows. Removes the formyl group from the N-terminal Met of newly synthesized proteins. Requires at least a dipeptide for an efficient rate of reaction. N-terminal L-methionine is a prerequisite for activity but the enzyme has broad specificity at other positions. The polypeptide is Peptide deformylase (Klebsiella pneumoniae (strain 342)).